Reading from the N-terminus, the 148-residue chain is MPSRLRKTRKLRGHVSHGHGRIGKHRKHPGGRGNAGGLHHHRINFDKYHPGYFGKVGMRHYHLKRNQSFCPTVNLDKLWTLVSEQTRVNAAKNKTGAAPIIDVVRSGYYKVLGKGKLPKQPVIVKAKFFSRRAEEKIKGVGGACVLVA.

Residues 1-30 (MPSRLRKTRKLRGHVSHGHGRIGKHRKHPG) are compositionally biased toward basic residues. A disordered region spans residues 1-39 (MPSRLRKTRKLRGHVSHGHGRIGKHRKHPGGRGNAGGLH). His39 is subject to (3S)-3-hydroxyhistidine. 2 positions are modified to N6-acetyllysine: Lys47 and Lys55. The residue at position 68 (Ser68) is a Phosphoserine. Lys110 carries the post-translational modification N6-acetyllysine.

The protein belongs to the universal ribosomal protein uL15 family. In terms of assembly, component of the large ribosomal subunit. Hydroxylated on His-39 by MINA.

It localises to the cytoplasm. Component of the large ribosomal subunit. The ribosome is a large ribonucleoprotein complex responsible for the synthesis of proteins in the cell. This is Large ribosomal subunit protein uL15 (RPL27A) from Macaca fascicularis (Crab-eating macaque).